The following is a 99-amino-acid chain: Aspartyl/glutamyl-tRNA(Asn/Gln) amidotransferase subunit C (99 aa).

It belongs to the GatC family. Heterotrimer of A, B and C subunits.

The catalysed reaction is L-glutamyl-tRNA(Gln) + L-glutamine + ATP + H2O = L-glutaminyl-tRNA(Gln) + L-glutamate + ADP + phosphate + H(+). It catalyses the reaction L-aspartyl-tRNA(Asn) + L-glutamine + ATP + H2O = L-asparaginyl-tRNA(Asn) + L-glutamate + ADP + phosphate + 2 H(+). In terms of biological role, allows the formation of correctly charged Asn-tRNA(Asn) or Gln-tRNA(Gln) through the transamidation of misacylated Asp-tRNA(Asn) or Glu-tRNA(Gln) in organisms which lack either or both of asparaginyl-tRNA or glutaminyl-tRNA synthetases. The reaction takes place in the presence of glutamine and ATP through an activated phospho-Asp-tRNA(Asn) or phospho-Glu-tRNA(Gln). This is Aspartyl/glutamyl-tRNA(Asn/Gln) amidotransferase subunit C from Ralstonia pickettii (strain 12J).